Here is a 1040-residue protein sequence, read N- to C-terminus: Multidrug resistance protein MdtB (1040 aa).

A run of 12 helical transmembrane segments spans residues 25 to 45 (LLMA…PVAA), 347 to 367 (LMLA…NIPA), 369 to 389 (IIPG…MVFL), 396 to 416 (LTLM…IVVI), 440 to 460 (IGFT…PLLF), 472 to 492 (FAVT…TLTP), 537 to 557 (WLTL…WIVI), 863 to 883 (LGST…VLGV), 888 to 908 (FIHP…ALLA), 910 to 930 (IIAG…LIGI), 968 to 988 (ILMT…STGV), and 998 to 1018 (IAMV…TPVI).

It belongs to the resistance-nodulation-cell division (RND) (TC 2.A.6) family. MdtB subfamily. As to quaternary structure, part of a tripartite efflux system composed of MdtA, MdtB and MdtC. MdtB forms a heteromultimer with MdtC.

It is found in the cell inner membrane. This is Multidrug resistance protein MdtB from Salmonella newport (strain SL254).